We begin with the raw amino-acid sequence, 423 residues long: Deferrochelatase (423 aa).

Positions 1 to 35 (MQYEDENGVNEPSRRRLLKGIGALALAGSCPVAHA) form a signal peptide, tat-type signal. Heme b contacts are provided by residues 236 to 238 (GTA), H329, 334 to 336 (NPR), and R347.

This sequence belongs to the DyP-type peroxidase family. EfeB subfamily. Homodimer. Part of a ferrous iron transporter composed of EfeU, EfeO and EfeB. It depends on heme b as a cofactor. In terms of processing, predicted to be exported by the Tat system. The position of the signal peptide cleavage has not been experimentally proven.

It localises to the periplasm. The catalysed reaction is heme b + 2 H(+) = protoporphyrin IX + Fe(2+). Functionally, involved in the recovery of exogenous heme iron. Extracts iron from heme while preserving the protoporphyrin ring intact. This chain is Deferrochelatase (efeB), found in Escherichia coli O6:H1 (strain CFT073 / ATCC 700928 / UPEC).